We begin with the raw amino-acid sequence, 740 residues long: ATP-dependent RNA helicase DDX1 (740 aa).

Residues M1 to V448 are interaction with dsRNA. A Helicase ATP-binding domain is found at A2–W428. Position 46–53 (A46–T53) interacts with ATP. A B30.2/SPRY domain is found at D70–F247. A DEAD box motif is present at residues D370–D373. One can recognise a Helicase C-terminal domain in the interval K493 to V681.

The protein belongs to the DEAD box helicase family. DDX1 subfamily. In terms of tissue distribution, detected in embryonic retina, brain, heart and liver (at protein level). Detected in embryonic retina, brain, heart, kidney and liver.

Its subcellular location is the nucleus. It is found in the cytoplasm. The protein localises to the cytoplasmic granule. The protein resides in the cytosol. It localises to the mitochondrion. The enzyme catalyses ATP + H2O = ADP + phosphate + H(+). Acts as an ATP-dependent RNA helicase, able to unwind both RNA-RNA and RNA-DNA duplexes. Possesses 5' single-stranded RNA overhang nuclease activity. Acts as a positive regulator of transcription. May be involved in 3'-end cleavage and polyadenylation of pre-mRNAs. Binds DNA and RNA. Component of the tRNA-splicing ligase complex required to facilitate the enzymatic turnover of catalytic subunit RTCB. Binds (via helicase ATP-binding domain) on both short and long poly(I:C) dsRNA. The chain is ATP-dependent RNA helicase DDX1 (DDX1) from Gallus gallus (Chicken).